The sequence spans 637 residues: tRNA 5-methylaminomethyl-2-thiouridine biosynthesis bifunctional protein MnmC (637 aa).

The tract at residues 1-232 (MPERIEWLED…KRDNLQGEFN (232 aa)) is tRNA (mnm(5)s(2)U34)-methyltransferase. Residues 255-637 (IGAGLAGAAV…YGEAKLVSED (383 aa)) are FAD-dependent cmnm(5)s(2)U34 oxidoreductase.

This sequence in the N-terminal section; belongs to the methyltransferase superfamily. tRNA (mnm(5)s(2)U34)-methyltransferase family. In the C-terminal section; belongs to the DAO family. The cofactor is FAD.

The protein localises to the cytoplasm. The catalysed reaction is 5-aminomethyl-2-thiouridine(34) in tRNA + S-adenosyl-L-methionine = 5-methylaminomethyl-2-thiouridine(34) in tRNA + S-adenosyl-L-homocysteine + H(+). Catalyzes the last two steps in the biosynthesis of 5-methylaminomethyl-2-thiouridine (mnm(5)s(2)U) at the wobble position (U34) in tRNA. Catalyzes the FAD-dependent demodification of cmnm(5)s(2)U34 to nm(5)s(2)U34, followed by the transfer of a methyl group from S-adenosyl-L-methionine to nm(5)s(2)U34, to form mnm(5)s(2)U34. The sequence is that of tRNA 5-methylaminomethyl-2-thiouridine biosynthesis bifunctional protein MnmC from Polaromonas sp. (strain JS666 / ATCC BAA-500).